Consider the following 371-residue polypeptide: MKIDSWLNDRLDIAKEAGVHRNLRSMNGAPVPERNIDGENQTVWSSNNYLGLASDRRLIDAAQTALQQFGTGSSGSRLTTGNSVWHEKLEKKIASFKRTEAALLFSSGYLANVGVLSSLPEKEDVILSDQLNHASIIDGCRLSKADTVVYRHIDMNDLENKLNETQRYQRRFIVTDGVFSMDGTIVPLDQIISLAKRYHAFVVVDDAHATGVLGDSGRGTSEYFGVYPDIVIGTLSKAVGTEGGFAAGSAVFIDFLLNHARTFIFQTAIPPASCAAAHEAFNIRTSLKNMGYVVKGDHTPIIPVVIGDAHKTVIFAEKLQGKGIYAPAIRPPTVAPGESRIRITITSDHSMGDIDDLLKTFHSIGKELHII.

Arginine 21 contributes to the substrate binding site. 108 to 109 (GY) is a binding site for pyridoxal 5'-phosphate. Residue histidine 133 participates in substrate binding. Residues serine 180, 205–208 (DDAH), and 234–237 (TLSK) contribute to the pyridoxal 5'-phosphate site. The residue at position 237 (lysine 237) is an N6-(pyridoxal phosphate)lysine. Threonine 333 contacts substrate.

This sequence belongs to the class-II pyridoxal-phosphate-dependent aminotransferase family. BioF subfamily. Homodimer. The cofactor is pyridoxal 5'-phosphate.

It carries out the reaction 6-carboxyhexanoyl-[ACP] + L-alanine + H(+) = (8S)-8-amino-7-oxononanoate + holo-[ACP] + CO2. The protein operates within cofactor biosynthesis; biotin biosynthesis. Functionally, catalyzes the decarboxylative condensation of pimeloyl-[acyl-carrier protein] and L-alanine to produce 8-amino-7-oxononanoate (AON), [acyl-carrier protein], and carbon dioxide. This chain is Putative 8-amino-7-oxononanoate synthase (bioF), found in Bacillus subtilis subsp. natto.